The chain runs to 142 residues: Cystatin-8 (142 aa).

Residues 1 to 19 (MAKPLWLSLILFIIPVALA) form the signal peptide. Residue N39 is glycosylated (N-linked (GlcNAc...) asparagine). The short motif at 77–81 (QITDR) is the Secondary area of contact element. Cystine bridges form between C95–C105 and C119–C139. N100 is a glycosylation site (N-linked (GlcNAc...) asparagine).

Belongs to the cystatin family. In terms of tissue distribution, proximal caput region of the epididymis. Lower expression in the testis. Within the testis it is localized to the elongating spermatids, whereas within the epididymis it is exclusively synthesized by the proximal caput epithelium.

It is found in the secreted. Functionally, performs a specialized role during sperm development and maturation. The chain is Cystatin-8 (Cst8) from Mus musculus (Mouse).